We begin with the raw amino-acid sequence, 443 residues long: Thymidine phosphorylase (443 aa).

Belongs to the thymidine/pyrimidine-nucleoside phosphorylase family. Homodimer.

The enzyme catalyses thymidine + phosphate = 2-deoxy-alpha-D-ribose 1-phosphate + thymine. It functions in the pathway pyrimidine metabolism; dTMP biosynthesis via salvage pathway; dTMP from thymine: step 1/2. In terms of biological role, the enzymes which catalyze the reversible phosphorolysis of pyrimidine nucleosides are involved in the degradation of these compounds and in their utilization as carbon and energy sources, or in the rescue of pyrimidine bases for nucleotide synthesis. This Shewanella loihica (strain ATCC BAA-1088 / PV-4) protein is Thymidine phosphorylase.